A 394-amino-acid chain; its full sequence is Flap endonuclease 1-A (394 aa).

The N-domain stretch occupies residues 1–105 (MGIKGLTGLL…GVLSKRLERR (105 aa)). A Mg(2+)-binding site is contributed by aspartate 34. 2 residues coordinate DNA: arginine 47 and arginine 71. Mg(2+) is bound by residues aspartate 87, glutamate 159, glutamate 161, aspartate 180, and aspartate 182. An I-domain region spans residues 123-254 (DVDRFSRRTV…KSALKLIREY (132 aa)). Residue glutamate 159 coordinates DNA. DNA contacts are provided by glycine 232 and aspartate 234. A Mg(2+)-binding site is contributed by aspartate 234. Positions 341–349 (QQGRLDGFF) are interaction with PCNA. Positions 356–375 (KAAAPAPVGKAKGKGKVDAK) are disordered.

It belongs to the XPG/RAD2 endonuclease family. FEN1 subfamily. In terms of assembly, interacts with PCNA. Three molecules of FEN1 bind to one PCNA trimer with each molecule binding to one PCNA monomer. PCNA stimulates the nuclease activity without altering cleavage specificity. The cofactor is Mg(2+). Post-translationally, phosphorylated. Phosphorylation upon DNA damage induces relocalization to the nuclear plasma.

It is found in the nucleus. It localises to the nucleolus. Its subcellular location is the nucleoplasm. The protein localises to the mitochondrion. Its function is as follows. Structure-specific nuclease with 5'-flap endonuclease and 5'-3' exonuclease activities involved in DNA replication and repair. During DNA replication, cleaves the 5'-overhanging flap structure that is generated by displacement synthesis when DNA polymerase encounters the 5'-end of a downstream Okazaki fragment. It enters the flap from the 5'-end and then tracks to cleave the flap base, leaving a nick for ligation. Also involved in the long patch base excision repair (LP-BER) pathway, by cleaving within the apurinic/apyrimidinic (AP) site-terminated flap. Acts as a genome stabilization factor that prevents flaps from equilibrating into structures that lead to duplications and deletions. Also possesses 5'-3' exonuclease activity on nicked or gapped double-stranded DNA, and exhibits RNase H activity. Also involved in replication and repair of rDNA and in repairing mitochondrial DNA. In Laccaria bicolor (strain S238N-H82 / ATCC MYA-4686) (Bicoloured deceiver), this protein is Flap endonuclease 1-A.